A 76-amino-acid polypeptide reads, in one-letter code: DNA-directed RNA polymerase subunit epsilon (76 aa).

It belongs to the RNA polymerase subunit epsilon family. In terms of assembly, RNAP is composed of a core of 2 alpha, a beta and a beta' subunit. The core is associated with a delta subunit, and at least one of epsilon or omega. When a sigma factor is associated with the core the holoenzyme is formed, which can initiate transcription.

It catalyses the reaction RNA(n) + a ribonucleoside 5'-triphosphate = RNA(n+1) + diphosphate. Functionally, a non-essential component of RNA polymerase (RNAP). The protein is DNA-directed RNA polymerase subunit epsilon of Streptococcus thermophilus (strain CNRZ 1066).